A 227-amino-acid polypeptide reads, in one-letter code: tRNA (guanine-N(7)-)-methyltransferase (227 aa).

The S-adenosyl-L-methionine site is built by E57, E82, D109, and D132. Residue D132 is part of the active site. Substrate is bound by residues K136, D168, and T205–E208.

It belongs to the class I-like SAM-binding methyltransferase superfamily. TrmB family.

It catalyses the reaction guanosine(46) in tRNA + S-adenosyl-L-methionine = N(7)-methylguanosine(46) in tRNA + S-adenosyl-L-homocysteine. The protein operates within tRNA modification; N(7)-methylguanine-tRNA biosynthesis. Catalyzes the formation of N(7)-methylguanine at position 46 (m7G46) in tRNA. The protein is tRNA (guanine-N(7)-)-methyltransferase of Leifsonia xyli subsp. xyli (strain CTCB07).